Consider the following 174-residue polypeptide: Disulfide bond formation protein B (174 aa).

Topologically, residues 1 to 14 are cytoplasmic; sequence MLHIFYIYSKSRKF. A helical membrane pass occupies residues 15–31; that stretch reads WAILICSSISLISIALL. Topologically, residues 32 to 49 are periplasmic; that stretch reads NQFFFLLKPCILCIYQRC. Cys-41 and Cys-44 are disulfide-bonded. Residues 50 to 65 traverse the membrane as a helical segment; it reads SLFGITIAGLIALISP. The Cytoplasmic portion of the chain corresponds to 66–72; sequence KTTLLRL. Residues 73–90 traverse the membrane as a helical segment; it reads FSIFIWLYSAIKGLYFSN. Over 91 to 146 the chain is Periplasmic; it reads IHMQTTLHPSSSLTCDLFVSFPNWLPLNKWYPIIFDSKISNCYSYPQYLLYLEISQ. A disulfide bond links Cys-105 and Cys-132. A helical membrane pass occupies residues 147–165; it reads WMLLFFLIYLIIAIFTIIS. The Cytoplasmic segment spans residues 166 to 174; it reads QCHNLFQKK.

The protein belongs to the DsbB family.

Its subcellular location is the cell inner membrane. Its function is as follows. Required for disulfide bond formation in some periplasmic proteins. Acts by oxidizing the DsbA protein. The chain is Disulfide bond formation protein B from Blochmanniella floridana.